Consider the following 92-residue polypeptide: Small ribosomal subunit protein uS19 (92 aa).

This sequence belongs to the universal ribosomal protein uS19 family.

Protein S19 forms a complex with S13 that binds strongly to the 16S ribosomal RNA. This chain is Small ribosomal subunit protein uS19, found in Bradyrhizobium diazoefficiens (strain JCM 10833 / BCRC 13528 / IAM 13628 / NBRC 14792 / USDA 110).